We begin with the raw amino-acid sequence, 460 residues long: MTLTAAIVLAAGEGTRMRSRKPKVLHEFAGKTFLNRVMDAVGALDPETLAVVVRYQAQRVAEAARSYDDAVLIVEQDEIPGTGRAVQCAMEQLGEQGPLSGTVLITASDMPLLDTSTLKQLLDYHRDSGDGATVLTTVLDDPTGYGRIIRDADGNVLKIVEQKDGNSSELAVREVNTSVYVFDAAVLEQAIANLNADNAQGEFYLTDALTVARQVSKVGAFAAPDPLSVEGVNDRVQLASLAKAHNLRVCRQWMLDGVTIVDPQTTWIEDEVEMESDAVILPGCFLQGHTTIAHDAVVGPYTTLIDATVEPEAHVERSRVQESRIGREANIGPWTYLRPGNEIGTGSKAGAFVEMKKAHIGDGSKVPHLSYVGDADLGENTNIGGGTITANYDGVHKNHTHIGSDVHIGAGNLFVAPVNVGDGVTSGAGSVIRHDVPGDAMVYSENTQHVVDNWKPAWER.

The tract at residues 1 to 235 is pyrophosphorylase; that stretch reads MTLTAAIVLA…PLSVEGVNDR (235 aa). Residues 9-12, Lys23, Gln76, and 81-82 each bind UDP-N-acetyl-alpha-D-glucosamine; these read LAAG and GT. Asp109 is a binding site for Mg(2+). The UDP-N-acetyl-alpha-D-glucosamine site is built by Gly146, Glu161, Asn176, and Asn233. Asn233 is a Mg(2+) binding site. Residues 236 to 256 form a linker region; that stretch reads VQLASLAKAHNLRVCRQWMLD. The interval 257-460 is N-acetyltransferase; it reads GVTIVDPQTT…VDNWKPAWER (204 aa). Residues Arg338 and Lys356 each coordinate UDP-N-acetyl-alpha-D-glucosamine. His368 serves as the catalytic Proton acceptor. Residues Tyr371 and Asn382 each contribute to the UDP-N-acetyl-alpha-D-glucosamine site. Acetyl-CoA contacts are provided by residues 391 to 392 and Ala428; that span reads NY.

This sequence in the N-terminal section; belongs to the N-acetylglucosamine-1-phosphate uridyltransferase family. In the C-terminal section; belongs to the transferase hexapeptide repeat family. In terms of assembly, homotrimer. The cofactor is Mg(2+).

The protein localises to the cytoplasm. The catalysed reaction is alpha-D-glucosamine 1-phosphate + acetyl-CoA = N-acetyl-alpha-D-glucosamine 1-phosphate + CoA + H(+). The enzyme catalyses N-acetyl-alpha-D-glucosamine 1-phosphate + UTP + H(+) = UDP-N-acetyl-alpha-D-glucosamine + diphosphate. It participates in nucleotide-sugar biosynthesis; UDP-N-acetyl-alpha-D-glucosamine biosynthesis; N-acetyl-alpha-D-glucosamine 1-phosphate from alpha-D-glucosamine 6-phosphate (route II): step 2/2. Its pathway is nucleotide-sugar biosynthesis; UDP-N-acetyl-alpha-D-glucosamine biosynthesis; UDP-N-acetyl-alpha-D-glucosamine from N-acetyl-alpha-D-glucosamine 1-phosphate: step 1/1. The protein operates within bacterial outer membrane biogenesis; LPS lipid A biosynthesis. In terms of biological role, catalyzes the last two sequential reactions in the de novo biosynthetic pathway for UDP-N-acetylglucosamine (UDP-GlcNAc). The C-terminal domain catalyzes the transfer of acetyl group from acetyl coenzyme A to glucosamine-1-phosphate (GlcN-1-P) to produce N-acetylglucosamine-1-phosphate (GlcNAc-1-P), which is converted into UDP-GlcNAc by the transfer of uridine 5-monophosphate (from uridine 5-triphosphate), a reaction catalyzed by the N-terminal domain. This is Bifunctional protein GlmU from Bifidobacterium animalis subsp. lactis (strain AD011).